The following is a 361-amino-acid chain: Outer mitochondrial transmembrane helix translocase (361 aa).

Over 1–15 the chain is Mitochondrial intermembrane; that stretch reads MVHAEAFSRPLSRNE. The helical transmembrane segment at 16-32 threads the bilayer; that stretch reads VVGLIFRLTIFGAVTYF. Over 33–361 the chain is Cytoplasmic; it reads TIKWMVDAID…QNVLTHVCLD (329 aa). 133 to 140 is a binding site for ATP; that stretch reads GPPGCGKT. Phosphoserine is present on S322.

Belongs to the AAA ATPase family. MSP1 subfamily. Interacts with GRIA2 and GRIP1 in an ATP-dependent manner. ATAD1-catalyzed ATP hydrolysis disrupts not only its binding to GRIA2 and GRIP1, but also interaction between GRIP1 and GRIA2, leading to AMPAR complex disassembly.

The protein resides in the mitochondrion outer membrane. The protein localises to the peroxisome membrane. Its subcellular location is the postsynaptic cell membrane. The catalysed reaction is [protein]-with a C-terminal TM segment(out) + ATP + H2O = [protein]-with a C-terminal TM segment(in) + ADP + phosphate + H(+). Outer mitochondrial translocase required to remove mislocalized tail-anchored transmembrane proteins on mitochondria. Specifically recognizes and binds tail-anchored transmembrane proteins: acts as a dislocase that mediates the ATP-dependent extraction of mistargeted tail-anchored transmembrane proteins from the mitochondrion outer membrane. Also plays a critical role in regulating the surface expression of AMPA receptors (AMPAR), thereby regulating synaptic plasticity and learning and memory. Required for NMDA-stimulated AMPAR internalization and inhibition of GRIA1 and GRIA2 recycling back to the plasma membrane; these activities are ATPase-dependent. In Homo sapiens (Human), this protein is Outer mitochondrial transmembrane helix translocase.